The sequence spans 700 residues: DNA ligase (700 aa).

Residues 42-46 (DDEYD), 91-92 (SL), and Glu-126 contribute to the NAD(+) site. Lys-128 acts as the N6-AMP-lysine intermediate in catalysis. Residues Arg-149, Glu-184, Lys-300, and Lys-324 each coordinate NAD(+). The Zn(2+) site is built by Cys-418, Cys-421, Cys-436, and Cys-441. Positions 598-686 (TRTDQLSGLN…GLGERGVAED (89 aa)) constitute a BRCT domain.

It belongs to the NAD-dependent DNA ligase family. LigA subfamily. Requires Mn(2+) as cofactor.

The catalysed reaction is NAD(+) + (deoxyribonucleotide)n-3'-hydroxyl + 5'-phospho-(deoxyribonucleotide)m = (deoxyribonucleotide)n+m + AMP + beta-nicotinamide D-nucleotide.. Its function is as follows. DNA ligase that catalyzes the formation of phosphodiester linkages between 5'-phosphoryl and 3'-hydroxyl groups in double-stranded DNA using NAD as a coenzyme and as the energy source for the reaction. It is essential for DNA replication and repair of damaged DNA. In Deinococcus radiodurans (strain ATCC 13939 / DSM 20539 / JCM 16871 / CCUG 27074 / LMG 4051 / NBRC 15346 / NCIMB 9279 / VKM B-1422 / R1), this protein is DNA ligase.